The chain runs to 249 residues: Segregation and condensation protein A (249 aa).

Belongs to the ScpA family. In terms of assembly, component of a cohesin-like complex composed of ScpA, ScpB and the Smc homodimer, in which ScpA and ScpB bind to the head domain of Smc. The presence of the three proteins is required for the association of the complex with DNA.

Its subcellular location is the cytoplasm. Participates in chromosomal partition during cell division. May act via the formation of a condensin-like complex containing Smc and ScpB that pull DNA away from mid-cell into both cell halves. The chain is Segregation and condensation protein A from Listeria welshimeri serovar 6b (strain ATCC 35897 / DSM 20650 / CCUG 15529 / CIP 8149 / NCTC 11857 / SLCC 5334 / V8).